A 747-amino-acid polypeptide reads, in one-letter code: Internal virion protein gp15 (747 aa).

This sequence belongs to the T7virus internal virion protein gp15 family. In terms of assembly, homooctamer. Interacts with gp16; after ejection the gp15-gp16 complex composed of a gp15 octamer and a gp16 tetramer probably binds both the viral DNA and the host inner membrane. Interacts with gp14.

It localises to the virion. The protein localises to the host periplasm. Functionally, component of the cylindrical core that assembles on the inner surface of the capsid during capsid formation and plays a role in viral DNA ejection into the host cell. The inner core is composed of stacked rings of gp14, gp15 and gp16 proteins. Following binding to the host cell surface, the internal core is disassembled and gp15 is ejected along with gp14 and gp16 into the infected cell. Gp15 probably remains associated with gp16. The gp15-gp16 complex binds to both the viral DNA and the host inner membrane, probably escorting the leading end of the genome through the periplasm and controlling the extend of DNA translocated into the host cell. The protein is Internal virion protein gp15 of Escherichia phage T7 (Bacteriophage T7).